The sequence spans 879 residues: Leucine--tRNA ligase (879 aa).

A 'HIGH' region motif is present at residues 46 to 56 (PYPSGALHMGH). Residues 638–642 (KMSKS) carry the 'KMSKS' region motif. Residue Lys-641 coordinates ATP.

The protein belongs to the class-I aminoacyl-tRNA synthetase family.

The protein resides in the cytoplasm. It catalyses the reaction tRNA(Leu) + L-leucine + ATP = L-leucyl-tRNA(Leu) + AMP + diphosphate. The protein is Leucine--tRNA ligase of Xanthomonas campestris pv. campestris (strain 8004).